The primary structure comprises 236 residues: MEIIPAIDLKQSKAVRLTKGDMQTAKIYSDKPWELAKEFEDLGAKWLHIVDLDGAFAGDAINLKTIEKIVSTTNLQVEVGGGIRTKERIKSYLNSGVSRIILGSIALKNPEFVKEVAKNYRVVVGIDAIDGFVAIEGWANVSKMQASNLAKLYADAGVEAIIATDISRDGMLNGVNVEFSASIAKASGIDTIASGGVKDINDIKCLKLNGNIAGVIVGKAYYEGKLDLKEAFKSNF.

Asp-8 (proton acceptor) is an active-site residue. The active-site Proton donor is Asp-127.

The protein belongs to the HisA/HisF family.

The protein localises to the cytoplasm. It carries out the reaction 1-(5-phospho-beta-D-ribosyl)-5-[(5-phospho-beta-D-ribosylamino)methylideneamino]imidazole-4-carboxamide = 5-[(5-phospho-1-deoxy-D-ribulos-1-ylimino)methylamino]-1-(5-phospho-beta-D-ribosyl)imidazole-4-carboxamide. It participates in amino-acid biosynthesis; L-histidine biosynthesis; L-histidine from 5-phospho-alpha-D-ribose 1-diphosphate: step 4/9. The protein is 1-(5-phosphoribosyl)-5-[(5-phosphoribosylamino)methylideneamino] imidazole-4-carboxamide isomerase of Campylobacter fetus subsp. fetus (strain 82-40).